Consider the following 248-residue polypeptide: Amphiregulin (248 aa).

The N-terminal stretch at 1–26 (MRTPLLPLARSVLLLLVLGSGHYAAA) is a signal peptide. A propeptide spanning residues 27 to 99 (LELNDPSSGK…IIDDSVRVEQ (73 aa)) is cleaved from the precursor. Disordered stretches follow at residues 29-48 (LNDP…SAGG), 57-77 (VSTI…YDYS), and 100-136 (VIKP…KKKK). A compositionally biased stretch (polar residues) spans 58 to 70 (STISEMPSGSELS). Basic and acidic residues predominate over residues 100-116 (VIKPKKNKTEGEKSTEK). The N-linked (GlcNAc...) asparagine glycan is linked to asparagine 106. Residues 117-136 (PKRKKKGGKNGKGRRNKKKK) show a composition bias toward basic residues. Residues 135–175 (KKNPCTAKFQNFCIHGECRYIENLEVVTCNCHQDYFGERCG) form the EGF-like domain. Disulfide bonds link cysteine 139/cysteine 152, cysteine 147/cysteine 163, and cysteine 165/cysteine 174. Residues 192 to 215 (IAVVAVTIFVSAIILAAIGIGIVI) traverse the membrane as a helical segment. N-linked (GlcNAc...) asparagine glycosylation occurs at asparagine 241.

It belongs to the amphiregulin family. In terms of assembly, the immature precursor interacts with CNIH.

Its subcellular location is the membrane. Functionally, ligand of the EGF receptor/EGFR. Autocrine growth factor as well as a mitogen for a broad range of target cells including astrocytes, Schwann cells and fibroblasts. This chain is Amphiregulin (Areg), found in Mus musculus (Mouse).